Consider the following 187-residue polypeptide: 5-formyltetrahydrofolate cyclo-ligase (187 aa).

ATP is bound by residues 6 to 10, 139 to 146, and Asp178; these read RQQIR and GMGGGFYD.

This sequence belongs to the 5-formyltetrahydrofolate cyclo-ligase family.

It catalyses the reaction (6S)-5-formyl-5,6,7,8-tetrahydrofolate + ATP = (6R)-5,10-methenyltetrahydrofolate + ADP + phosphate. Its pathway is one-carbon metabolism; tetrahydrofolate interconversion. Involved in the removal of 5-formyltetrahydrofolate. In vitro, it is a potent inhibitor of various folate-dependent enzymes in the C1 metabolism network and in vivo it might function as a folate storage. 5-formyltetrahydrofolate is also used as an antifolate rescue agent in cancer chemotherapy. Catalyzes the irreversible ATP-dependent transformation of 5-formyltetrahydrofolate (5-CHO-THF) to form 5,10-methenyltetrahydrofolate (5,10-CH=THF). The reverse reaction is catalyzed by the serine hydroxymethyltransferase GlyA (SHMT). This is 5-formyltetrahydrofolate cyclo-ligase from Haemophilus influenzae (strain ATCC 51907 / DSM 11121 / KW20 / Rd).